The sequence spans 283 residues: Probable endonuclease 4 (283 aa).

Residues His-69, His-109, Glu-144, Asp-178, His-181, His-215, Asp-228, His-230, and Glu-260 each coordinate Zn(2+).

Belongs to the AP endonuclease 2 family. Zn(2+) is required as a cofactor.

It carries out the reaction Endonucleolytic cleavage to 5'-phosphooligonucleotide end-products.. Endonuclease IV plays a role in DNA repair. It cleaves phosphodiester bonds at apurinic or apyrimidinic (AP) sites, generating a 3'-hydroxyl group and a 5'-terminal sugar phosphate. The polypeptide is Probable endonuclease 4 (Thermosipho melanesiensis (strain DSM 12029 / CIP 104789 / BI429)).